The primary structure comprises 381 residues: Dual specificity protein phosphatase 6 (381 aa).

The Rhodanese domain occupies Gly30–Glu148. Residues Ser176 to Gln203 are disordered. Residues Asn189 to Gln203 show a composition bias toward polar residues. In terms of domain architecture, Tyrosine-protein phosphatase spans Phe206–Leu349. Cys293 (phosphocysteine intermediate) is an active-site residue.

The protein belongs to the protein-tyrosine phosphatase family. Non-receptor class dual specificity subfamily. Interacts with MAPK1/ERK2. Ubiquitinated by the SCF(FBXO31) complex, leading to its proteasomal degradation. Expressed in keratinocytes (at protein level).

It localises to the cytoplasm. The catalysed reaction is O-phospho-L-tyrosyl-[protein] + H2O = L-tyrosyl-[protein] + phosphate. It carries out the reaction O-phospho-L-seryl-[protein] + H2O = L-seryl-[protein] + phosphate. It catalyses the reaction O-phospho-L-threonyl-[protein] + H2O = L-threonyl-[protein] + phosphate. Functionally, dual specificity protein phosphatase, which mediates dephosphorylation and inactivation of MAP kinases. Has a specificity for the ERK family. Plays an important role in alleviating chronic postoperative pain. Necessary for the normal dephosphorylation of the long-lasting phosphorylated forms of spinal MAPK1/3 and MAP kinase p38 induced by peripheral surgery, which drives the resolution of acute postoperative allodynia. Also important for dephosphorylation of MAPK1/3 in local wound tissue, which further contributes to resolution of acute pain. Promotes cell differentiation by regulating MAPK1/MAPK3 activity and regulating the expression of AP1 transcription factors. The polypeptide is Dual specificity protein phosphatase 6 (DUSP6) (Homo sapiens (Human)).